Here is a 132-residue protein sequence, read N- to C-terminus: Small ribosomal subunit protein uS8 (132 aa).

It belongs to the universal ribosomal protein uS8 family. As to quaternary structure, part of the 30S ribosomal subunit. Contacts proteins S5 and S12.

One of the primary rRNA binding proteins, it binds directly to 16S rRNA central domain where it helps coordinate assembly of the platform of the 30S subunit. This is Small ribosomal subunit protein uS8 from Natranaerobius thermophilus (strain ATCC BAA-1301 / DSM 18059 / JW/NM-WN-LF).